The sequence spans 56 residues: MLNKILDKLVEAYSIIFRTRVQFPPSPFILFFFLSFKHNSYSQQALLSLENLLSLF.

This is an uncharacterized protein from Borreliella burgdorferi (strain ATCC 35210 / DSM 4680 / CIP 102532 / B31) (Borrelia burgdorferi).